Here is a 340-residue protein sequence, read N- to C-terminus: 4-hydroxythreonine-4-phosphate dehydrogenase (340 aa).

Residues His141 and Thr142 each contribute to the substrate site. A divalent metal cation is bound by residues His171, His216, and His271. Substrate-binding residues include Lys279, Asn288, and Arg297.

The protein belongs to the PdxA family. As to quaternary structure, homodimer. The cofactor is Zn(2+). Mg(2+) serves as cofactor. It depends on Co(2+) as a cofactor.

Its subcellular location is the cytoplasm. It carries out the reaction 4-(phosphooxy)-L-threonine + NAD(+) = 3-amino-2-oxopropyl phosphate + CO2 + NADH. It participates in cofactor biosynthesis; pyridoxine 5'-phosphate biosynthesis; pyridoxine 5'-phosphate from D-erythrose 4-phosphate: step 4/5. In terms of biological role, catalyzes the NAD(P)-dependent oxidation of 4-(phosphooxy)-L-threonine (HTP) into 2-amino-3-oxo-4-(phosphooxy)butyric acid which spontaneously decarboxylates to form 3-amino-2-oxopropyl phosphate (AHAP). The chain is 4-hydroxythreonine-4-phosphate dehydrogenase from Desulforapulum autotrophicum (strain ATCC 43914 / DSM 3382 / VKM B-1955 / HRM2) (Desulfobacterium autotrophicum).